The sequence spans 432 residues: Luc7-like protein 3 (432 aa).

The residue at position 1 (Met-1) is an N-acetylmethionine. 3 positions are modified to phosphoserine: Ser-3, Ser-110, and Ser-115. A coiled-coil region spans residues 124 to 181; sequence KNEEKIQVLTDKIDVLLQQIEELGSEGKVEEAQGMMKLVEQLKEERELLRSTTSTIES. At Lys-231 the chain carries N6-acetyllysine. Over residues 234 to 287 the composition is skewed to basic and acidic residues; the sequence is LRKRTEEPDRDERLKKEKQEREEREKEREREREERERKRRREEEEREKERARDR. Residues 234-432 form a disordered region; that stretch reads LRKRTEEPDR…IKSEGDTQSN (199 aa). Over residues 288 to 301 the composition is skewed to basic residues; that stretch reads ERRKRSRSRSRHSS. Over residues 302-311 the composition is skewed to basic and acidic residues; sequence RTSDRRCSRS. Basic residues predominate over residues 312-367; that stretch reads RDHKRSRSRERRRSRSRDRRRSRSHDRSERKHRSRSRDRRRSKSRDRKSYKHRSKS. Positions 368-414 are enriched in basic and acidic residues; the sequence is RDREQDRKSKEKEKRGSDDKKSSVKSSSREKQSEDTNTESKESDTKN. Ser-420 carries the phosphoserine modification. Basic and acidic residues predominate over residues 421–432; it reads EDIKSEGDTQSN. Lys-424 participates in a covalent cross-link: Glycyl lysine isopeptide (Lys-Gly) (interchain with G-Cter in SUMO1); alternate. Lys-424 participates in a covalent cross-link: Glycyl lysine isopeptide (Lys-Gly) (interchain with G-Cter in SUMO2); alternate. Phosphoserine is present on residues Ser-425 and Ser-431.

It belongs to the Luc7 family. As to quaternary structure, may interact with SFRS1 and form homodimers. Interacts with JMJD6. Interacts with RBM25. Interacts with RSRC1 (via Arg/Ser-rich domain). Interacts with RRP1B.

Its subcellular location is the nucleus speckle. Its function is as follows. Binds cAMP regulatory element DNA sequence. May play a role in RNA splicing. The sequence is that of Luc7-like protein 3 (LUC7L3) from Bos taurus (Bovine).